The following is a 40-amino-acid chain: Photosystem II reaction center protein J (40 aa).

A helical membrane pass occupies residues 8–28; that stretch reads IPLWLIGTVAGIPVIGLVGVF.

The protein belongs to the PsbJ family. PSII is composed of 1 copy each of membrane proteins PsbA, PsbB, PsbC, PsbD, PsbE, PsbF, PsbH, PsbI, PsbJ, PsbK, PsbL, PsbM, PsbT, PsbX, PsbY, PsbZ, Psb30/Ycf12, at least 3 peripheral proteins of the oxygen-evolving complex and a large number of cofactors. It forms dimeric complexes.

The protein resides in the plastid. It is found in the chloroplast thylakoid membrane. One of the components of the core complex of photosystem II (PSII). PSII is a light-driven water:plastoquinone oxidoreductase that uses light energy to abstract electrons from H(2)O, generating O(2) and a proton gradient subsequently used for ATP formation. It consists of a core antenna complex that captures photons, and an electron transfer chain that converts photonic excitation into a charge separation. This Hordeum jubatum (Foxtail barley) protein is Photosystem II reaction center protein J.